Consider the following 202-residue polypeptide: Dual-action ribosomal maturation protein DarP (202 aa).

A compositionally biased stretch (low complexity) spans 1 to 13 (MPPMTRNTRNNPN). Positions 1–39 (MPPMTRNTRNNPNGRFPGAFAPEDEDDLPKSKSQRKRDM) are disordered.

This sequence belongs to the DarP family.

It localises to the cytoplasm. Functionally, member of a network of 50S ribosomal subunit biogenesis factors which assembles along the 30S-50S interface, preventing incorrect 23S rRNA structures from forming. Promotes peptidyl transferase center (PTC) maturation. This Cupriavidus metallidurans (strain ATCC 43123 / DSM 2839 / NBRC 102507 / CH34) (Ralstonia metallidurans) protein is Dual-action ribosomal maturation protein DarP.